A 263-amino-acid chain; its full sequence is Peptidoglycan-N-acetylmuramic acid deacetylase PdaA (263 aa).

A signal peptide spans 1-23 (MKWMCSICCAAVLLAGGAAQAEA). A NodB homology domain is found at 66–247 (KTIYLTFDNG…DLKKQGYTFK (182 aa)). The active-site Proton acceptor is the D73. The a divalent metal cation site is built by H124 and H128. H222 functions as the Proton donor in the catalytic mechanism.

The protein belongs to the polysaccharide deacetylase family.

Its function is as follows. Catalyzes the deacetylation of N-acetylmuramic acid (MurNAc) residues in glycan strands of peptidoglycan, leading to the formation of muramic delta-lactam residues in spore cortex, after transpeptidation of deacetylated muramic acid residues. PdaA probably carries out both deacetylation and lactam ring formation and requires the product of CwlD activity on peptidoglycan as a substrate. Is required for germination. Cannot use chitin oligomer (hexa-N-acetylchitohexaose) as a substrate. The sequence is that of Peptidoglycan-N-acetylmuramic acid deacetylase PdaA (pdaA) from Bacillus subtilis (strain 168).